A 370-amino-acid polypeptide reads, in one-letter code: MAENQNCARMTRAAAKRKASSMALDENPVSKKRVVLGELPNMSNVVAVPNQERETLKAKTSVNTSKRQMKKALMIPEASVLIESRSVDPQMCEPFASDICAYLREMEGKPKHRPLPDYIEKVQSDLTPHMRAVLVDWLVEVAEEYKLVSDTLYLTISYVDRFLSVKPINRQKLQLVGVSAMLIASRKYEEIGPPKVEDFCYITDNTFTKQEVVSMEADILLALQFELGSPTIKTFLRRFTRVAQEDFKDSQLQIEFLCCYLSELSMLDYTCVKYLPSLLSASAVFLARFIIRPKQHPWNQMLEEYTKYKAADLQVCVGIIHDLYLSRRGNTLEAVRNKYKQHKYKCVATMPVSPELPLAFFEDITIRGMA.

Belongs to the cyclin family. Cyclin AB subfamily. Interacts with FZR2/CCS52A1, FZR1/CCS52A2 and FZR3/CCS52B.

This Arabidopsis thaliana (Mouse-ear cress) protein is Cyclin-A3-4 (CYCA3-4).